Here is a 177-residue protein sequence, read N- to C-terminus: Inner membrane-spanning protein YciB (177 aa).

The next 5 membrane-spanning stretches (helical) occupy residues 23–43 (MFVATGVAIAATAVMVAWAWF), 50–70 (TMQWISLGLIVVLGGATLLLH), 73–93 (HFIMWKPTVLYWVMGAGLLIS), 119–139 (LTWAWSGFFAFMGALNLFVAY), and 149–169 (FKLFGGMGLMLLFVIAQSLFL).

Belongs to the YciB family.

It localises to the cell inner membrane. Plays a role in cell envelope biogenesis, maintenance of cell envelope integrity and membrane homeostasis. In Chromobacterium violaceum (strain ATCC 12472 / DSM 30191 / JCM 1249 / CCUG 213 / NBRC 12614 / NCIMB 9131 / NCTC 9757 / MK), this protein is Inner membrane-spanning protein YciB.